Here is a 437-residue protein sequence, read N- to C-terminus: Succinyl-CoA:cyclohexane-1-carboxylate CoA transferase (437 aa).

CoA is bound at residue 221 to 225; sequence GWGGI. The active-site 5-glutamyl coenzyme A thioester intermediate is glutamate 244. Residues leucine 319, glycine 342, and lysine 367 each contribute to the CoA site.

This sequence belongs to the acetyl-CoA hydrolase/transferase family. As to quaternary structure, homodimer.

It catalyses the reaction cyclohexane-1-carboxylate + succinyl-CoA = cyclohexane-1-carbonyl-CoA + succinate. It carries out the reaction cyclohexane-1-carboxylate + butanoyl-CoA = cyclohexane-1-carbonyl-CoA + butanoate. Its function is as follows. Acyl-CoA transferase involved in the anaerobic degradation of cyclohexane carboxylic acid (CHC). Catalyzes the activation of CHC to cyclohexane-1-carbonyl-CoA (CHCoA). Benzoic acid and cyclohex-1-ene-1-carboxylic acid can also be used as substrates, but with lower specific activity. Shows highest activity with succinyl-CoA and butanoyl-coA as a CoA donor, and lower activity with crotonyl-CoA, acetyl-CoA, glutaryl-CoA, CH1eneCoA, propionyl-CoA and acetoacetyl-CoA. In vitro, the enzyme can use butanoyl-coA as a CoA donor with greater efficiency than succinyl-CoA. However, succinyl-CoA is the most abundant CoA ester in exponentially grown cells, whereas butanoyl-coA is hardly detectable, indicating that succinyl-CoA is the natural CoA donor for CHC activation. The chain is Succinyl-CoA:cyclohexane-1-carboxylate CoA transferase from Geobacter metallireducens (strain ATCC 53774 / DSM 7210 / GS-15).